Here is a 148-residue protein sequence, read N- to C-terminus: UPF0756 membrane protein YeaL (148 aa).

The next 4 membrane-spanning stretches (helical) occupy residues 14–34 (ALGFISHNTTVAVSILVLIIV), 51–71 (LSIGIIILTIGVMAPIASGTL), 86–106 (LVAIAVGVIVSWLGGRGVTLM), and 121–141 (VLGVALFRGVPVGPLIAAGLV).

Belongs to the UPF0756 family.

Its subcellular location is the cell membrane. The sequence is that of UPF0756 membrane protein YeaL from Escherichia coli (strain B / REL606).